The following is a 320-amino-acid chain: uncharacterized protein (320 aa).

The next 7 membrane-spanning stretches (helical) occupy residues 24 to 44 (FEFS…IFFI), 65 to 85 (FVLS…LWSL), 105 to 125 (TTSC…FIVV), 132 to 152 (SWFV…IAIL), 179 to 199 (ISLT…IYTF), 226 to 246 (MIPI…YFGY), and 253 to 275 (TSRW…MLSL).

Its subcellular location is the membrane. This is an uncharacterized protein from Caenorhabditis elegans.